Here is a 128-residue protein sequence, read N- to C-terminus: MFYSIVAIFVGAGLGALLRWFLSLALNAFFPAVPLGTLASNLIGGYVIGVAAVVFTVRVGLPPEWRLFVITGFLGGLTTFSTYSVEVMTHALEGEFGWALAVAALHLTGSFALTALGMWTARAWLAAA.

The next 4 helical transmembrane spans lie at 5–25, 35–55, 67–87, and 96–116; these read IVAI…LSLA, LGTL…AVVF, LFVI…SVEV, and FGWA…LTAL. Residues Gly-75 and Thr-78 each coordinate Na(+).

It belongs to the fluoride channel Fluc/FEX (TC 1.A.43) family.

The protein localises to the cell inner membrane. It carries out the reaction fluoride(in) = fluoride(out). Na(+) is not transported, but it plays an essential structural role and its presence is essential for fluoride channel function. Functionally, fluoride-specific ion channel. Important for reducing fluoride concentration in the cell, thus reducing its toxicity. The polypeptide is Fluoride-specific ion channel FluC (Burkholderia cenocepacia (strain HI2424)).